The primary structure comprises 280 residues: MTRCTADNSLTNPAYRRRTMATGEMKEFLGIKGTEPTDFGINSDAQDLPSPSRQASTRRMSIGESIDGKINDWEEPRLDIEGFVVDYFTHRIRQNGMEWFGAPGLPCGVQPEHEMMRVMGTIFEKKHAENFETFCEQLLAVPRISFSLYQDVVRTVGNAQTDQCPMSYGRLIGLISFGGFVAAKMMESVELQGQVRNLFVYTSLFIKTRIRNNWKEHNRSWDDFMTLGKQMKEDYERAEAEKVGRRKQNRRWSMIGAGVTAGAIGIVGVVVCGRMMFSLK.

The interval 33-59 is disordered; that stretch reads GTEPTDFGINSDAQDLPSPSRQASTRR. Polar residues predominate over residues 43–59; it reads SDAQDLPSPSRQASTRR. Residues 80-99 carry the BH4 motif; the sequence is IEGFVVDYFTHRIRQNGMEW. The short motif at 160–179 is the BH1 element; it reads QTDQCPMSYGRLIGLISFGG. The BH2 signature appears at 213-229; it reads NWKEHNRSWDDFMTLGK.

Belongs to the Bcl-2 family. As to quaternary structure, interacts with asymmetric homodimer ced-4; the interaction sequesters ced-4. Interacts with egl-1; the interaction results in ced-4 release. Interacts with dre-1; the interaction inhibits ced-9 activity, either directly or indirectly. Interacts with dct-1. May form a complex composed of ced-9, ced-4 and mac-1. Interacts with dynamin-related protein drp-1 (via residues 280-502); the interaction is enhanced by GTP rather than GDP; the interaction is probably direct and may occur at the mitochondrion. Interaction with drp-1 may be enhanced by interaction of ced-9 with egl-1, but not with ced-4. A ced-9/egl-1 complex may recruit drp-1 to the mitochondrial surface. Interacts with fzo-1; interaction may be suppressed by interaction of ced-9 with egl-1.

The protein resides in the perikaryon. It is found in the synapse. It localises to the endomembrane system. Its subcellular location is the mitochondrion membrane. The protein localises to the cytoplasm. Functionally, plays a major role in programmed cell death (PCD, apoptosis). egl-1 binds to and directly inhibits the activity of ced-9, releasing the cell death activator ced-4 from a ced-9/ced-4 containing protein complex and allowing ced-4 to activate the cell-killing caspase ced-3. During larval development, required for the elimination of transient presynaptic components downstream of egl-1 and upstream of ced-4 and ced-3 apoptotic pathway. Has been shown in one study to be dispensable in mitochondrial dynamics and morphology during early embryonic development. However, another study shows that a egl-1/ced-9 containing complex may promote drp-1-dependent mitochondrial fission. The sequence is that of Apoptosis regulator ced-9 (ced-9) from Caenorhabditis elegans.